We begin with the raw amino-acid sequence, 1862 residues long: Ankyrin-1 (1862 aa).

The 89 kDa domain stretch occupies residues M1–R827. ANK repeat units lie at residues N40–T69, K73–A102, K106–V135, D139–V168, L170–V197, T201–F230, N234–T263, D267–A296, N300–D329, D333–S362, N366–A395, S399–V428, K432–A461, D465–L494, A498–C527, K531–A560, N564–S593, N597–A626, Q630–L659, S663–A692, M696–A725, L729–E758, and N762–V791. K55 carries the post-translational modification Phosphoserine. (3S)-3-hydroxyasparagine; by HIF1AN; partial is present on N101. N229 bears the (3S)-3-hydroxyasparagine; by HIF1AN mark. A Phosphoserine modification is found at S425. A (3S)-3-hydroxyasparagine; by HIF1AN mark is found at N427 and N460. (3S)-3-hydroxyasparagine; by HIF1AN is present on residues N625 and N658. Residue D691 is modified to (3S)-3-hydroxyaspartate; by HIF1AN. N724 bears the (3S)-3-hydroxyasparagine; by HIF1AN mark. S755 carries the phosphoserine modification. N757 bears the (3S)-3-hydroxyasparagine; by HIF1AN mark. A phosphoserine mark is found at S777, S813, S830, and S852. Residues V812–G834 form a disordered region. Residues K824–G834 show a composition bias toward basic and acidic residues. T862 carries the post-translational modification Phosphothreonine. The disordered stretch occupies residues D872–P900. The span at I886–P900 shows a compositional bias: polar residues. ZU5 domains follow at residues F909 to R1064 and C1066 to C1212. Phosphothreonine is present on T957. The residue at position 1069 (Y1069) is a Phosphotyrosine. At S1078 the chain carries Phosphoserine. The segment at A1197–E1331 is UPA domain. Phosphothreonine occurs at positions 1374 and 1376. S1386 and S1388 each carry phosphoserine. The interval E1387 to Q1862 is 55 kDa regulatory domain. T1396 is subject to Phosphothreonine. The 85-residue stretch at V1399–G1483 folds into the Death domain. S1424, S1473, and S1482 each carry phosphoserine. A disordered region spans residues G1481–Q1506. Positions L1489–Y1500 are enriched in basic and acidic residues. S1519, S1529, and S1612 each carry phosphoserine. Disordered stretches follow at residues E1598–S1720 and V1744–S1767. Residues E1637–E1647 are compositionally biased toward basic and acidic residues. The span at V1648–Q1666 shows a compositional bias: polar residues. Residues S1660, S1675, and S1685 each carry the phosphoserine modification. Over residues V1681–K1694 the composition is skewed to basic and acidic residues. A compositionally biased stretch (polar residues) spans Q1695–S1720.

As to quaternary structure, component of the ankyrin-1 complex in the erythrocyte, composed of ANK1, RHCE, RHAG, SLC4A1, EPB42, GYPA, GYPB and AQP1. Interacts with a number of integral membrane proteins and cytoskeletal proteins. Interacts (via N-terminus) with SPTB/spectrin (beta chain). Also interacts with TTN/titin. Isoform Mu17 interacts with OBSCN isoform 3/obscurin. Interacts with HIF1AN. Interacts (via ANK 1-5 repeats) with RHCE; this interaction mediates the primary membrane attachment site for ANK1. Interacts (via ANK 1-2 repeats) with AQP1 (via the N-terminal). Interacts (via ANK 1-13 repeats) with EPB42. Interacts directly with SLC4A1 (via the cytoplasmic domain); this interaction is mediated by the SLC4A1 Band 3-II and Band 3-III dimers. Post-translationally, regulated by phosphorylation. Acylated by palmitic acid group(s). In terms of processing, hydroxylated by HIF1AN at several asparagine and 1 aspartate residue within ANK repeat region; hydroxylation seems to increase the conformational stability of this region and may also modulate protein-protein interactions mediated by the ANK repeat region.

It is found in the cytoplasm. Its subcellular location is the cytoskeleton. It localises to the membrane. The protein localises to the sarcoplasmic reticulum. In terms of biological role, component of the ankyrin-1 complex, a multiprotein complex involved in the stability and shape of the erythrocyte membrane. Attaches integral membrane proteins to cytoskeletal elements; binds to the erythrocyte membrane protein band 4.2, to Na-K ATPase, to the lymphocyte membrane protein GP85, and to the cytoskeletal proteins fodrin, tubulin, vimentin and desmin. Erythrocyte ankyrins also link spectrin (beta chain) to the cytoplasmic domain of the erythrocytes anion exchange protein; they retain most or all of these binding functions. This is Ankyrin-1 from Mus musculus (Mouse).